We begin with the raw amino-acid sequence, 38 residues long: Large ribosomal subunit protein bL36 (38 aa).

This sequence belongs to the bacterial ribosomal protein bL36 family.

The protein is Large ribosomal subunit protein bL36 of Pseudothermotoga lettingae (strain ATCC BAA-301 / DSM 14385 / NBRC 107922 / TMO) (Thermotoga lettingae).